A 427-amino-acid chain; its full sequence is MNKNKREKEFYSVDVGDSTFTVLKRYQNLRPIGSGAQGIVCSAYDHNLERNVAIKKLSRPFQNQTHAKRAYRELVLMKCVNHKNIIGLLNVFTPQKTLEEFQDVYLVMELMDANLCQVIQMELDHERLSYLLYQMLCGTKHLHSAGIIHRDLKPSNIVVKSDCTLKILDFGLARTAATGLLMTPYVVTRYYRAPEVILGMGYQANVDVWSVGCIMAEMVRGSVLFPGSDHIDQWNKVIEQLGTPSQEFMMKLNQSVRTYVENRPRYTGYSFEKLFPDVLFPADSEHNKLKASQARDLLSKMLVIDASKRISVDEALQHPYINVWYDPAEVEAPPPLIIDKQLDEREHTVEEWKELIFKEVLDWEERMKNGVIRGQPSPIGAAVINGSPQPSSSSSINDVSSMSTEPTVASDTDSSLEASAGPLSCCR.

Residues 26–321 enclose the Protein kinase domain; the sequence is YQNLRPIGSG…VDEALQHPYI (296 aa). ATP contacts are provided by residues 33-40 and lysine 55; that span reads GSGAQGIV. Aspartate 151 serves as the catalytic Proton acceptor. Threonine 183 is modified (phosphothreonine). Positions 183-185 match the TXY motif; the sequence is TPY. A Phosphotyrosine modification is found at tyrosine 185. The interval 372-427 is disordered; the sequence is IRGQPSPIGAAVINGSPQPSSSSSINDVSSMSTEPTVASDTDSSLEASAGPLSCCR. The span at 387–403 shows a compositional bias: low complexity; that stretch reads SPQPSSSSSINDVSSMS. Over residues 404–417 the composition is skewed to polar residues; sequence TEPTVASDTDSSLE.

It belongs to the protein kinase superfamily. CMGC Ser/Thr protein kinase family. MAP kinase subfamily. Requires Mg(2+) as cofactor. Post-translationally, dually phosphorylated on Thr-183 and Tyr-185, which activates the enzyme. In terms of tissue distribution, expressed at high levels in the ovary and at lower levels in brain, gill, heart, spleen, liver, kidney, muscle, bladder and gut.

It catalyses the reaction L-seryl-[protein] + ATP = O-phospho-L-seryl-[protein] + ADP + H(+). It carries out the reaction L-threonyl-[protein] + ATP = O-phospho-L-threonyl-[protein] + ADP + H(+). Its activity is regulated as follows. Activated by threonine and tyrosine phosphorylation. Responds to activation by environmental stress and pro-inflammatory cytokines by phosphorylating a number of transcription factors, primarily components of AP-1 such as c-Jun and ATF2 and thus regulates AP-1 transcriptional activity. May play a role in the regulation of the circadian clock. This Cyprinus carpio (Common carp) protein is Mitogen-activated protein kinase 8B (mapk8b).